A 197-amino-acid polypeptide reads, in one-letter code: MAAKEKISRREHILQCLAQMLETNPGQRITTAKLAAEVGVSEAALYRHFPSKARMFEGLIEFIEDSLLSRINLIMDDEKDTMRRCQLVLQLLLLFAERNPGISRVLNGDALLGENERLRSRVSALFGKIETQLKQILREKTLREGKGFELDEAMLANLLLAVAEGRIAQYIRSEFKQKPTEHFDEQWGFIQKQLLQS.

The HTH tetR-type domain maps to 7–67 (ISRREHILQC…GLIEFIEDSL (61 aa)). The segment at residues 30–49 (TTAKLAAEVGVSEAALYRHF) is a DNA-binding region (H-T-H motif).

Belongs to the nucleoid occlusion factor SlmA family. Homodimer. Interacts with FtsZ.

The protein localises to the cytoplasm. It localises to the nucleoid. Functionally, required for nucleoid occlusion (NO) phenomenon, which prevents Z-ring formation and cell division over the nucleoid. Acts as a DNA-associated cell division inhibitor that binds simultaneously chromosomal DNA and FtsZ, and disrupts the assembly of FtsZ polymers. SlmA-DNA-binding sequences (SBS) are dispersed on non-Ter regions of the chromosome, preventing FtsZ polymerization at these regions. This Shewanella amazonensis (strain ATCC BAA-1098 / SB2B) protein is Nucleoid occlusion factor SlmA.